The primary structure comprises 92 residues: Cell division protein FtsB (92 aa).

At 1 to 3 the chain is on the cytoplasmic side; that stretch reads MRL. The chain crosses the membrane as a helical span at residues 4–21; that stretch reads FIFLLVAVLLLFQYDFWF. At 22–92 the chain is on the periplasmic side; that stretch reads GKNGYLDYKR…IFYHIVKEQK (71 aa). The stretch at 26–74 forms a coiled coil; the sequence is YLDYKRTAQQIAQHKQENEKLSQRNQVVAAEIKDLKQGVEAIEERARFQ.

The protein belongs to the FtsB family. In terms of assembly, part of a complex composed of FtsB, FtsL and FtsQ.

The protein localises to the cell inner membrane. Functionally, essential cell division protein. May link together the upstream cell division proteins, which are predominantly cytoplasmic, with the downstream cell division proteins, which are predominantly periplasmic. This is Cell division protein FtsB from Pasteurella multocida (strain Pm70).